The sequence spans 119 residues: Beta-2-microglobulin (119 aa).

Positions 1 to 20 (MARSVVVALLVLLSLSGLEA) are cleaved as a signal peptide. The region spanning 25–114 (PKIQVYSRHP…VTFPTPKTVK (90 aa)) is the Ig-like C1-type domain. A disulfide bond links Cys-45 and Cys-100.

It belongs to the beta-2-microglobulin family. In terms of assembly, heterodimer of an alpha chain and a beta chain. Beta-2-microglobulin is the beta-chain of major histocompatibility complex class I molecules.

It is found in the secreted. In terms of biological role, component of the class I major histocompatibility complex (MHC). Involved in the presentation of peptide antigens to the immune system. This chain is Beta-2-microglobulin (B2M), found in Lagothrix lagotricha (Brown woolly monkey).